The following is a 244-amino-acid chain: Probable transcriptional regulatory protein CHAB381_1426 (244 aa).

The protein belongs to the TACO1 family.

The protein localises to the cytoplasm. The polypeptide is Probable transcriptional regulatory protein CHAB381_1426 (Campylobacter hominis (strain ATCC BAA-381 / DSM 21671 / CCUG 45161 / LMG 19568 / NCTC 13146 / CH001A)).